Consider the following 464-residue polypeptide: UDP-N-acetylmuramoylalanine--D-glutamate ligase (464 aa).

Position 127-133 (127-133 (GSNGKST)) interacts with ATP.

The protein belongs to the MurCDEF family.

It is found in the cytoplasm. It carries out the reaction UDP-N-acetyl-alpha-D-muramoyl-L-alanine + D-glutamate + ATP = UDP-N-acetyl-alpha-D-muramoyl-L-alanyl-D-glutamate + ADP + phosphate + H(+). The protein operates within cell wall biogenesis; peptidoglycan biosynthesis. In terms of biological role, cell wall formation. Catalyzes the addition of glutamate to the nucleotide precursor UDP-N-acetylmuramoyl-L-alanine (UMA). The protein is UDP-N-acetylmuramoylalanine--D-glutamate ligase of Dinoroseobacter shibae (strain DSM 16493 / NCIMB 14021 / DFL 12).